The sequence spans 430 residues: tRNA(Ile)-lysidine synthase (430 aa).

Position 21–26 (21–26 (SGGLDS)) interacts with ATP.

This sequence belongs to the tRNA(Ile)-lysidine synthase family.

The protein localises to the cytoplasm. It catalyses the reaction cytidine(34) in tRNA(Ile2) + L-lysine + ATP = lysidine(34) in tRNA(Ile2) + AMP + diphosphate + H(+). In terms of biological role, ligates lysine onto the cytidine present at position 34 of the AUA codon-specific tRNA(Ile) that contains the anticodon CAU, in an ATP-dependent manner. Cytidine is converted to lysidine, thus changing the amino acid specificity of the tRNA from methionine to isoleucine. In Salmonella typhi, this protein is tRNA(Ile)-lysidine synthase.